A 113-amino-acid polypeptide reads, in one-letter code: Dolichyl-diphosphooligosaccharide--protein glycosyltransferase subunit DAD1 (113 aa).

Ser-2 carries the post-translational modification N-acetylserine. Residues 2–30 (SASVVSVISRFLEEYLSSTPQRLKLLDAY) are Cytoplasmic-facing. The helical transmembrane segment at 31-51 (LLYILLTGALQFGYCLLVGTF) threads the bilayer. Residue Pro-52 is a topological domain, lumenal. A helical membrane pass occupies residues 53-73 (FNSFLSGFISCVGSFILAVCL). Residues 74–92 (RIQINPQNKADFQGISPER) are Cytoplasmic-facing. Residues 93-113 (AFADFLFASTILHLVVMNFVG) form a helical membrane-spanning segment.

The protein belongs to the DAD/OST2 family. Component of the oligosaccharyltransferase (OST) complex. OST exists in two different complex forms which contain common core subunits RPN1, RPN2, OST48, OST4, DAD1 and TMEM258, either STT3A or STT3B as catalytic subunits, and form-specific accessory subunits. STT3A complex assembly occurs through the formation of 3 subcomplexes. Subcomplex 1 contains RPN1 and TMEM258, subcomplex 2 contains the STT3A-specific subunits STT3A, DC2/OSTC, and KCP2 as well as the core subunit OST4, and subcomplex 3 contains RPN2, DAD1, and OST48. The STT3A complex can form stable complexes with the Sec61 complex or with both the Sec61 and TRAP complexes.

It is found in the endoplasmic reticulum membrane. Its pathway is protein modification; protein glycosylation. Its function is as follows. Subunit of the oligosaccharyl transferase (OST) complex that catalyzes the initial transfer of a defined glycan (Glc(3)Man(9)GlcNAc(2) in eukaryotes) from the lipid carrier dolichol-pyrophosphate to an asparagine residue within an Asn-X-Ser/Thr consensus motif in nascent polypeptide chains, the first step in protein N-glycosylation. N-glycosylation occurs cotranslationally and the complex associates with the Sec61 complex at the channel-forming translocon complex that mediates protein translocation across the endoplasmic reticulum (ER). All subunits are required for a maximal enzyme activity. This chain is Dolichyl-diphosphooligosaccharide--protein glycosyltransferase subunit DAD1, found in Mus musculus (Mouse).